The chain runs to 690 residues: MARWWGGEGRGGSGTPVVVKMESPEWAISEVEAGAAAPGSPAAGGKAGRGKNARQITWVLLLKAHRAAGKLTGAASAALSVAAAARRRVAAGRTDSDDAAAAPPGESPALRARFHGFLRAFLLLSVLLLAVDVAAHAQGWHAVVPDLLAVEGLFAAAYASWLRVRLEYLAPGLQFLANACVVLFLIQSADRLILCLGCLWIKLKGIKPVPKASGGGGGGKGSDDVEAGADEFPMVLVQIPMCNEKEVYQQSIGAVCNLDWPRSNFLVQVLDDSDDAATSALIKEEVEKWQREGVRILYRHRVIRDGYKAGNLKSAMNCSYVKDYEFVVIFDADFQPQADFLKRTVPHFKGNEDVGLVQARWSFVNKDENLLTRLQNINLCFHFEVEQQVNGVFLNFFGFNGTAGVWRIKALEDSGGWMERTTVEDMDIAVRAHLKGWKFLYINDVECQCELPESYEAYRKQQHRWHSGPMQLFRLCFVDIIKSKIGVWKKFNLIFLFFLLRKLILPFYSFTLFCIILPMTMFVPEAELPAWVVCYIPATMSLLNILPAPKSFPFIVPYLLFENTMSVTKFNAMISGLFQLGSAYEWVVTKKSGRSSEGDLVSLVEKQPKQQRVGSAPNLDSLAKESHPKKDSKKKKHNRIYQKELALSFLLLTAAARSLLSVQGIHFYFLLFQGVSFLVVGLDLIGEQVE.

A run of 2 helical transmembrane segments spans residues A120–W140 and L166–I186. Residue D272 is part of the active site. The substrate site is built by D331 and D333. D425 is an active-site residue. 2 helical membrane-spanning segments follow: residues L503 to V523 and L528 to A548. The segment at Q607–H637 is disordered. The next 2 helical transmembrane spans lie at I640–L659 and I665–I685.

This sequence belongs to the glycosyltransferase 2 family. Plant cellulose synthase-like C subfamily.

The protein resides in the golgi apparatus membrane. Its function is as follows. Probable beta-1,4-glucan synthase rather involved in the synthesis of the xyloglucan backbone than cellulose. Seems to work simultaneously with xyloglucan 6-xylosyltransferase. Xyloglucan is a noncellulosic polysaccharides of plant cell wall and consists of a glucan backbone substituted by xylose, galactose and fucose. This chain is Probable xyloglucan glycosyltransferase 1 (CSLC1), found in Oryza sativa subsp. japonica (Rice).